A 92-amino-acid polypeptide reads, in one-letter code: PqqA binding protein (92 aa).

It belongs to the PqqD family. As to quaternary structure, monomer. Interacts with PqqE.

The protein operates within cofactor biosynthesis; pyrroloquinoline quinone biosynthesis. Functions as a PqqA binding protein and presents PqqA to PqqE, in the pyrroloquinoline quinone (PQQ) biosynthetic pathway. This is PqqA binding protein from Klebsiella pneumoniae (strain 342).